The primary structure comprises 283 residues: ATP synthase gamma chain (283 aa).

The protein belongs to the ATPase gamma chain family. As to quaternary structure, F-type ATPases have 2 components, CF(1) - the catalytic core - and CF(0) - the membrane proton channel. CF(1) has five subunits: alpha(3), beta(3), gamma(1), delta(1), epsilon(1). CF(0) has three main subunits: a, b and c.

Its subcellular location is the cell membrane. In terms of biological role, produces ATP from ADP in the presence of a proton gradient across the membrane. The gamma chain is believed to be important in regulating ATPase activity and the flow of protons through the CF(0) complex. This is ATP synthase gamma chain from Desulforamulus reducens (strain ATCC BAA-1160 / DSM 100696 / MI-1) (Desulfotomaculum reducens).